Here is a 373-residue protein sequence, read N- to C-terminus: D-alanine--D-alanine ligase (373 aa).

Residues 156–363 form the ATP-grasp domain; it reads KKLLAAEGLP…YPTLLAAMVD (208 aa). 184-239 serves as a coordination point for ATP; the sequence is RERLGLPVFVKPARGGSSIGVSRVTAWDELPAAVALARRHDPKVIVEAAVIGRELE. The Mg(2+) site is built by aspartate 318, glutamate 330, and asparagine 332.

The protein belongs to the D-alanine--D-alanine ligase family. The cofactor is Mg(2+). Mn(2+) serves as cofactor.

It is found in the cytoplasm. The catalysed reaction is 2 D-alanine + ATP = D-alanyl-D-alanine + ADP + phosphate + H(+). It participates in cell wall biogenesis; peptidoglycan biosynthesis. In terms of biological role, cell wall formation. The sequence is that of D-alanine--D-alanine ligase from Mycolicibacterium smegmatis (strain ATCC 700084 / mc(2)155) (Mycobacterium smegmatis).